A 1149-amino-acid chain; its full sequence is Golgi apparatus protein 1 homolog (1149 aa).

The signal sequence occupies residues 1–19 (MWRFPLILASVCWLTTAQQ). The Extracellular portion of the chain corresponds to 20–1115 (QNVANDPDKK…NLVMEHPERN (1096 aa)). 16 Cys-rich GLG1 repeats span residues 24–69 (NDPD…FSET), 71–135 (TLSE…KNVT), 139–207 (KCHA…VKNA), 216–276 (ILGD…NDKF), 277–344 (MDPE…NQPE), 349–411 (QPSK…ESRN), 415–475 (KLGA…NVDS), 477–549 (DMVP…YDEQ), 551–610 (PLSV…ETDN), 613–676 (RKHP…DAKE), 677–736 (MNNK…FEHK), 743–803 (DLTD…IECL), 809–867 (HLGP…IVRL), 868–938 (LQRE…RQSI), 945–1009 (DFSP…NKGL), and 1010–1070 (IRDK…DKQE). Residue Asn-133 is glycosylated (N-linked (GlcNAc...) asparagine). A glycan (N-linked (GlcNAc...) asparagine) is linked at Asn-411. A helical transmembrane segment spans residues 1116-1136 (SILGYLAGFIVFILLIGCCCG). Topologically, residues 1137–1149 (RVSKKQYIEMKNR) are cytoplasmic.

The protein resides in the membrane. This chain is Golgi apparatus protein 1 homolog, found in Caenorhabditis elegans.